A 163-amino-acid chain; its full sequence is Crossover junction endodeoxyribonuclease RuvC (163 aa).

Active-site residues include Asp-7, Glu-66, and Asp-139. Mg(2+) contacts are provided by Asp-7, Glu-66, and Asp-139.

The protein belongs to the RuvC family. As to quaternary structure, homodimer which binds Holliday junction (HJ) DNA. The HJ becomes 2-fold symmetrical on binding to RuvC with unstacked arms; it has a different conformation from HJ DNA in complex with RuvA. In the full resolvosome a probable DNA-RuvA(4)-RuvB(12)-RuvC(2) complex forms which resolves the HJ. The cofactor is Mg(2+).

It localises to the cytoplasm. It catalyses the reaction Endonucleolytic cleavage at a junction such as a reciprocal single-stranded crossover between two homologous DNA duplexes (Holliday junction).. The RuvA-RuvB-RuvC complex processes Holliday junction (HJ) DNA during genetic recombination and DNA repair. Endonuclease that resolves HJ intermediates. Cleaves cruciform DNA by making single-stranded nicks across the HJ at symmetrical positions within the homologous arms, yielding a 5'-phosphate and a 3'-hydroxyl group; requires a central core of homology in the junction. The consensus cleavage sequence is 5'-(A/T)TT(C/G)-3'. Cleavage occurs on the 3'-side of the TT dinucleotide at the point of strand exchange. HJ branch migration catalyzed by RuvA-RuvB allows RuvC to scan DNA until it finds its consensus sequence, where it cleaves and resolves the cruciform DNA. This is Crossover junction endodeoxyribonuclease RuvC from Thermomicrobium roseum (strain ATCC 27502 / DSM 5159 / P-2).